The sequence spans 390 residues: MDATQLTELMGSHDFMQLQHQLHHNNNNYNTDGHNGLSSESAEGSSRPVRRATRRTSQLSNNTYDLEMTDSSSQSDDTSGGGGSSNGGGSTTNTGHPSGCSLGGQGPSGRGRVQQASSGACPSTIAPNSTSSNSSNANGNASRRRKGALNAKERNMRRLESNERERMRMHSLNDAFQSLREVIPHVEMERRLSKIETLTLAKNYIINLTHIILSKRNEEAAALELNSGAVGGVLLSNLSSESGGPVASGIPANSNAATICFEDTLASGGAFDCAILAATDGSLLNAATVTTSPAMQSIQSQAIHLQTPMEQQQQQASHLPHHQQAMHGHGHLGASIQSQQQPSLVLNGTTSVGLGIGIGVGVGVGVGVCNNAPSFADINDNFDEPFREFL.

A disordered region spans residues 24 to 163 (HNNNNYNTDG…RNMRRLESNE (140 aa)). 2 stretches are compositionally biased toward polar residues: residues 29–44 (YNTD…SAEG) and 55–64 (RTSQLSNNTY). The N-linked (GlcNAc...) asparagine glycan is linked to asparagine 61. A compositionally biased stretch (low complexity) spans 69-78 (TDSSSQSDDT). Over residues 79–90 (SGGGGSSNGGGS) the composition is skewed to gly residues. A compositionally biased stretch (low complexity) spans 122–141 (PSTIAPNSTSSNSSNANGNA). N-linked (GlcNAc...) asparagine glycans are attached at residues asparagine 128, asparagine 133, and asparagine 140. The span at 151–163 (AKERNMRRLESNE) shows a compositional bias: basic and acidic residues. A bHLH domain is found at 156-208 (MRRLESNERERMRMHSLNDAFQSLREVIPHVEMERRLSKIETLTLAKNYIINL). Asparagine 207 and asparagine 237 each carry an N-linked (GlcNAc...) asparagine glycan. Positions 312-339 (QQQQASHLPHHQQAMHGHGHLGASIQSQ) are disordered. N-linked (GlcNAc...) asparagine glycosylation is present at asparagine 347.

Forms homodimers via the bHLH domain. These dimers bind the core E-box sequence. As to expression, detected in the developing nervous system in the bilateral domains in the cephalic region that later on forms part of the ring gland. Concomitantly expressed in the larval central nervous system (CNS), including the dorsal chain neurons as well as several bilateral clusters of neurons: large, midline protocerebral brain cells (MC), lateral protocerebral brain cells (LC), ventral subesophageal neurons (SE) and lateral abdominal neurons, and the transverse nerves. Outside the CNS, detected in at least three classes of endocrine cells: intrinsic cells of the corpora cardiaca, midgut cells, the Inka cells, lateral Bipolar neurons associated with the segmental transverse nerve, and several peptidergic cells of the enteric nervous system. Expressed only in central and peripheral neuroendocrine secretory cells and neurosecretory neurons but not in sensory or motor neurons.

The protein resides in the cytoplasm. Its function is as follows. Transcription factor that regulates neurosecretory (NS) cell function and neuroendocrine cell fate. Acts as a master regulator of common NS functions such as Phm expression and neuropeptide production. Plays a role as a regulator of peptide-containing large dense-core vesicle (LDCV) production and peptidergic cell differentiation. Controls transcription of FMRFamide in Tv neuronal cells and Fur1 in Ap-let cells (Tvb and dorsal apterous cells). Also required for up-regulation of Phm in Tv and Ap-let cells, and expression of three neuropeptide genes, Ms, FMRFamide and Lk. Influences both regulated and constitutive secretory activity in neuroendocrine cells at embryonic and postembryonic level. Loss of function studies show reduced cellular levels of various neuropeptides and neuropeptide biosynthetic enzymes. The protein is Protein dimmed (dimm) of Drosophila melanogaster (Fruit fly).